We begin with the raw amino-acid sequence, 389 residues long: Na(+)/H(+) antiporter NhaA (389 aa).

Transmembrane regions (helical) follow at residues 24-44, 56-76, 94-114, 122-142, 152-172, 176-196, 216-236, 259-279, 291-311, 326-346, and 363-383; these read ILLILCTILSLSIANSLAGPA, LSIEHWVNDALMAVFFLFVGL, LLPIFAAIGGIGVPALIHYTL, AGTGIPMATDIAFALGVLALL, VFLTALAVMDDLGAIIVIAMF, QFSLVYLLSALAVFGLLLVLN, FLMLKSGVHATIAGVLLAFAI, PVAFIILPIFALANTGIVIGS, LGIIGGLVFGKPLGIALLSFV, WTHIVGAGILGGIGFTMSIFI, and MAILMASVAAGGLGFLWLSFF.

Belongs to the NhaA Na(+)/H(+) (TC 2.A.33) antiporter family.

The protein resides in the cell inner membrane. It catalyses the reaction Na(+)(in) + 2 H(+)(out) = Na(+)(out) + 2 H(+)(in). Na(+)/H(+) antiporter that extrudes sodium in exchange for external protons. This Dechloromonas aromatica (strain RCB) protein is Na(+)/H(+) antiporter NhaA.